Consider the following 170-residue polypeptide: Peptide deformylase (170 aa).

Residues C91 and H133 each coordinate Fe cation. The active site involves E134. Fe cation is bound at residue H137.

It belongs to the polypeptide deformylase family. Requires Fe(2+) as cofactor.

The catalysed reaction is N-terminal N-formyl-L-methionyl-[peptide] + H2O = N-terminal L-methionyl-[peptide] + formate. Its function is as follows. Removes the formyl group from the N-terminal Met of newly synthesized proteins. Requires at least a dipeptide for an efficient rate of reaction. N-terminal L-methionine is a prerequisite for activity but the enzyme has broad specificity at other positions. The protein is Peptide deformylase of Aliivibrio fischeri (strain ATCC 700601 / ES114) (Vibrio fischeri).